The following is a 1202-amino-acid chain: CHD3-type chromatin-remodeling factor CHR7 (1202 aa).

Chromo domains follow at residues 45 to 109 and 142 to 201; these read GEIE…HPHL and KTVD…RDKY. A Helicase ATP-binding domain is found at 237-405; sequence RYSWSKKTNV…FALMHFLDAD (169 aa). 250 to 257 contacts ATP; sequence DEMGLGKT. Residues 356–359 carry the DEAH box motif; it reads DEGH. One can recognise a Helicase C-terminal domain in the interval 528 to 679; that stretch reads LLDKMMVKLK…HLVVGKQHLC (152 aa). The interval 838–872 is disordered; that stretch reads TSDEEEEADEPEAARQRKPRTVTRPYRKRARDNSE. Residues 853 to 867 are compositionally biased toward basic residues; the sequence is QRKPRTVTRPYRKRA.

It belongs to the SNF2/RAD54 helicase family.

It is found in the nucleus. Chromatin remodeling factor that represses the expression of embryonic trait genes upon and after seed germination and thus enables the developmental switch to post-germinative growth. This is CHD3-type chromatin-remodeling factor CHR7 from Arabidopsis thaliana (Mouse-ear cress).